The chain runs to 328 residues: Tetraacyldisaccharide 4'-kinase (328 aa).

Residue 55 to 62 participates in ATP binding; sequence TAGGNGKT.

Belongs to the LpxK family.

It catalyses the reaction a lipid A disaccharide + ATP = a lipid IVA + ADP + H(+). It participates in glycolipid biosynthesis; lipid IV(A) biosynthesis; lipid IV(A) from (3R)-3-hydroxytetradecanoyl-[acyl-carrier-protein] and UDP-N-acetyl-alpha-D-glucosamine: step 6/6. In terms of biological role, transfers the gamma-phosphate of ATP to the 4'-position of a tetraacyldisaccharide 1-phosphate intermediate (termed DS-1-P) to form tetraacyldisaccharide 1,4'-bis-phosphate (lipid IVA). The chain is Tetraacyldisaccharide 4'-kinase from Escherichia coli O81 (strain ED1a).